The following is a 287-amino-acid chain: UTP--glucose-1-phosphate uridylyltransferase 1 (287 aa).

The protein belongs to the UDPGP type 2 family.

The enzyme catalyses alpha-D-glucose 1-phosphate + UTP + H(+) = UDP-alpha-D-glucose + diphosphate. It participates in glycolipid metabolism; diglucosyl-diacylglycerol biosynthesis. In terms of biological role, catalyzes the formation of UDP-glucose from glucose-1-phosphate and UTP. This is an intermediate step in the biosynthesis of diglucosyl-diacylglycerol (Glc2-DAG), i.e. a glycolipid found in the membrane, which is also used as a membrane anchor for lipoteichoic acid (LTA). This Staphylococcus saprophyticus subsp. saprophyticus (strain ATCC 15305 / DSM 20229 / NCIMB 8711 / NCTC 7292 / S-41) protein is UTP--glucose-1-phosphate uridylyltransferase 1 (gtaB1).